The primary structure comprises 211 residues: tRNA (guanine-N(7)-)-methyltransferase (211 aa).

Residues Glu-44, Asp-69, Asp-96, and Asp-118 each contribute to the S-adenosyl-L-methionine site. Asp-118 is an active-site residue. Lys-122 is a binding site for substrate. Residues 124–129 (KHEKRR) are interaction with RNA. Substrate is bound by residues Asp-154 and 191–194 (TEYE).

This sequence belongs to the class I-like SAM-binding methyltransferase superfamily. TrmB family.

It catalyses the reaction guanosine(46) in tRNA + S-adenosyl-L-methionine = N(7)-methylguanosine(46) in tRNA + S-adenosyl-L-homocysteine. The protein operates within tRNA modification; N(7)-methylguanine-tRNA biosynthesis. Functionally, catalyzes the formation of N(7)-methylguanine at position 46 (m7G46) in tRNA. The sequence is that of tRNA (guanine-N(7)-)-methyltransferase from Streptococcus agalactiae serotype Ia (strain ATCC 27591 / A909 / CDC SS700).